Here is a 728-residue protein sequence, read N- to C-terminus: Catalase-peroxidase 1 (728 aa).

The N-terminal stretch at 1–22 (MDKTQSSQGKCPVMHGANSAVA) is a signal peptide. The segment at residues 97 to 225 (WHSAGTYRVA…LAAVMMGLIY (129 aa)) is a cross-link (tryptophyl-tyrosyl-methioninium (Trp-Tyr) (with M-251)). The active-site Proton acceptor is His98. Positions 225-251 (YVNPEGVDGKPDPLRTAQDVRVTFARM) form a cross-link, tryptophyl-tyrosyl-methioninium (Tyr-Met) (with W-97). His266 is a heme b binding site.

The protein belongs to the peroxidase family. Peroxidase/catalase subfamily. As to quaternary structure, homodimer or homotetramer. The cofactor is heme b. Post-translationally, formation of the three residue Trp-Tyr-Met cross-link is important for the catalase, but not the peroxidase activity of the enzyme.

The enzyme catalyses H2O2 + AH2 = A + 2 H2O. It carries out the reaction 2 H2O2 = O2 + 2 H2O. Bifunctional enzyme with both catalase and broad-spectrum peroxidase activity. The sequence is that of Catalase-peroxidase 1 from Shewanella sp. (strain MR-7).